Here is a 152-residue protein sequence, read N- to C-terminus: MAGKIFAVRVTHGQEETTAKLIYSKVRTYNLPIYAILAPSRVKGYIFVEAPNKGVVDEAIRGIRHARGVLPGEVPFKEIEHFLEEKPAVSGLEPGDLVEVIAGPFKGQKAKVVKIDESKDEVVVQFIDAIVPIPVTIKGDYVRLISKLQKEE.

In terms of domain architecture, KOW spans 94 to 124 (PGDLVEVIAGPFKGQKAKVVKIDESKDEVVV).

The protein belongs to the archaeal Spt5 family. In terms of assembly, heterodimer composed of Spt4 and Spt5. Interacts with RNA polymerase (RNAP) independently of nucleic acids. Forms a homodimer in solution.

Its function is as follows. Stimulates transcription elongation. The protein is Transcription elongation factor Spt5 of Pyrococcus furiosus (strain ATCC 43587 / DSM 3638 / JCM 8422 / Vc1).